A 199-amino-acid chain; its full sequence is GTP cyclohydrolase-2 (199 aa).

50–54 contributes to the GTP binding site; sequence RIHSE. Residues cysteine 55, cysteine 66, and cysteine 68 each coordinate Zn(2+). GTP contacts are provided by residues glutamine 71, 93 to 95, and threonine 115; that span reads EGR. The active-site Proton acceptor is the aspartate 127. The Nucleophile role is filled by arginine 129. Residues threonine 150 and lysine 155 each contribute to the GTP site.

Belongs to the GTP cyclohydrolase II family. In terms of assembly, homodimer. It depends on Zn(2+) as a cofactor.

It carries out the reaction GTP + 4 H2O = 2,5-diamino-6-hydroxy-4-(5-phosphoribosylamino)-pyrimidine + formate + 2 phosphate + 3 H(+). It participates in cofactor biosynthesis; riboflavin biosynthesis; 5-amino-6-(D-ribitylamino)uracil from GTP: step 1/4. Functionally, catalyzes the conversion of GTP to 2,5-diamino-6-ribosylamino-4(3H)-pyrimidinone 5'-phosphate (DARP), formate and pyrophosphate. The chain is GTP cyclohydrolase-2 from Buchnera aphidicola subsp. Baizongia pistaciae (strain Bp).